Consider the following 321-residue polypeptide: Lipoyl synthase (321 aa).

[4Fe-4S] cluster is bound by residues Cys-68, Cys-73, Cys-79, Cys-94, Cys-98, Cys-101, and Ser-308. The 218-residue stretch at 80 to 297 (FNHGTATFMI…RVFAEEIGFT (218 aa)) folds into the Radical SAM core domain.

This sequence belongs to the radical SAM superfamily. Lipoyl synthase family. The cofactor is [4Fe-4S] cluster.

The protein resides in the cytoplasm. It catalyses the reaction [[Fe-S] cluster scaffold protein carrying a second [4Fe-4S](2+) cluster] + N(6)-octanoyl-L-lysyl-[protein] + 2 oxidized [2Fe-2S]-[ferredoxin] + 2 S-adenosyl-L-methionine + 4 H(+) = [[Fe-S] cluster scaffold protein] + N(6)-[(R)-dihydrolipoyl]-L-lysyl-[protein] + 4 Fe(3+) + 2 hydrogen sulfide + 2 5'-deoxyadenosine + 2 L-methionine + 2 reduced [2Fe-2S]-[ferredoxin]. The protein operates within protein modification; protein lipoylation via endogenous pathway; protein N(6)-(lipoyl)lysine from octanoyl-[acyl-carrier-protein]: step 2/2. Its function is as follows. Catalyzes the radical-mediated insertion of two sulfur atoms into the C-6 and C-8 positions of the octanoyl moiety bound to the lipoyl domains of lipoate-dependent enzymes, thereby converting the octanoylated domains into lipoylated derivatives. The chain is Lipoyl synthase from Shewanella woodyi (strain ATCC 51908 / MS32).